A 359-amino-acid polypeptide reads, in one-letter code: Outer membrane protein assembly factor BamC (359 aa).

A signal peptide spans 1–21 (MSTLNKYKTLIIISSLAAVSS). A lipid anchor (N-palmitoyl cysteine) is attached at Cys22. Residue Cys22 is the site of S-diacylglycerol cysteine attachment.

It belongs to the BamC family. In terms of assembly, part of the Bam complex.

It localises to the cell outer membrane. Its function is as follows. Part of the outer membrane protein assembly complex, which is involved in assembly and insertion of beta-barrel proteins into the outer membrane. This Kangiella koreensis (strain DSM 16069 / JCM 12317 / KCTC 12182 / SW-125) protein is Outer membrane protein assembly factor BamC.